A 149-amino-acid chain; its full sequence is Transcriptional repressor NrdR (149 aa).

Residues 3–34 fold into a zinc finger; it reads CPFCSAVDTKVIDSRLVAEGHQVRRRRECLLC. The 91-residue stretch at 49–139 folds into the ATP-cone domain; that stretch reads PRVIKSNGSR…VYRSFEDIRE (91 aa).

The protein belongs to the NrdR family. The cofactor is Zn(2+).

Functionally, negatively regulates transcription of bacterial ribonucleotide reductase nrd genes and operons by binding to NrdR-boxes. This Aeromonas salmonicida (strain A449) protein is Transcriptional repressor NrdR.